The sequence spans 555 residues: Formate--tetrahydrofolate ligase (555 aa).

65–72 (TPAGEGKT) lines the ATP pocket.

Belongs to the formate--tetrahydrofolate ligase family.

The enzyme catalyses (6S)-5,6,7,8-tetrahydrofolate + formate + ATP = (6R)-10-formyltetrahydrofolate + ADP + phosphate. It participates in one-carbon metabolism; tetrahydrofolate interconversion. The chain is Formate--tetrahydrofolate ligase from Thermoanaerobacter sp. (strain X514).